Reading from the N-terminus, the 667-residue chain is DNA ligase (667 aa).

NAD(+)-binding positions include 32–36 and 80–81; these read DKDYD and SL. The N6-AMP-lysine intermediate role is filled by Lys-121. NAD(+) contacts are provided by Arg-143, Glu-178, and Lys-314. Residues Cys-407, Cys-410, Cys-423, and Cys-429 each contribute to the Zn(2+) site. A BRCT domain is found at 587–667; sequence IVESIFKDKT…EFEKMLGRES (81 aa).

The protein belongs to the NAD-dependent DNA ligase family. LigA subfamily. Requires Mg(2+) as cofactor. Mn(2+) is required as a cofactor.

The enzyme catalyses NAD(+) + (deoxyribonucleotide)n-3'-hydroxyl + 5'-phospho-(deoxyribonucleotide)m = (deoxyribonucleotide)n+m + AMP + beta-nicotinamide D-nucleotide.. In terms of biological role, DNA ligase that catalyzes the formation of phosphodiester linkages between 5'-phosphoryl and 3'-hydroxyl groups in double-stranded DNA using NAD as a coenzyme and as the energy source for the reaction. It is essential for DNA replication and repair of damaged DNA. The protein is DNA ligase of Clostridium botulinum (strain Eklund 17B / Type B).